Reading from the N-terminus, the 516-residue chain is Maturase K (516 aa).

Belongs to the intron maturase 2 family. MatK subfamily.

It localises to the plastid. Its subcellular location is the chloroplast. Its function is as follows. Usually encoded in the trnK tRNA gene intron. Probably assists in splicing its own and other chloroplast group II introns. The polypeptide is Maturase K (Chara globularis (Fragile stonewort)).